The chain runs to 303 residues: Pantothenate synthetase (303 aa).

30–37 (MGYLHAGH) lines the ATP pocket. The Proton donor role is filled by H37. Q61 provides a ligand contact to (R)-pantoate. Q61 is a binding site for beta-alanine. 147–150 (GAKD) lines the ATP pocket. Q153 serves as a coordination point for (R)-pantoate. Residues V176 and 184–187 (LSSR) each bind ATP.

This sequence belongs to the pantothenate synthetase family. As to quaternary structure, homodimer.

It localises to the cytoplasm. The catalysed reaction is (R)-pantoate + beta-alanine + ATP = (R)-pantothenate + AMP + diphosphate + H(+). The protein operates within cofactor biosynthesis; (R)-pantothenate biosynthesis; (R)-pantothenate from (R)-pantoate and beta-alanine: step 1/1. In terms of biological role, catalyzes the condensation of pantoate with beta-alanine in an ATP-dependent reaction via a pantoyl-adenylate intermediate. In Rhizobium johnstonii (strain DSM 114642 / LMG 32736 / 3841) (Rhizobium leguminosarum bv. viciae), this protein is Pantothenate synthetase.